Here is a 307-residue protein sequence, read N- to C-terminus: Olfactory receptor 12D2 (307 aa).

The Extracellular portion of the chain corresponds to 1 to 23 (MLNTTSVTEFLLLGVTDIQELQP). An N-linked (GlcNAc...) asparagine glycan is attached at Asn3. The chain crosses the membrane as a helical span at residues 24-44 (FLFVVFLTIYFISVTGNGAVL). Over 45–52 (MIVISDPR) the chain is Cytoplasmic. Residues 53–73 (LHSLMYFFLGNLSYLDICYST) form a helical membrane-spanning segment. Residues 74 to 97 (VTLPKMLQNFLSTHKAISFLGCIS) are Extracellular-facing. Residues Cys95 and Cys187 are joined by a disulfide bond. Residues 98–118 (QLHFFHSLGSTESMLFAVMAF) traverse the membrane as a helical segment. Residues 119 to 137 (DLSVAICKPLRYTVIMNPQ) lie on the Cytoplasmic side of the membrane. A helical transmembrane segment spans residues 138–158 (LCTQMAITIWVIGFFHALLHS). The Extracellular portion of the chain corresponds to 159-195 (VMTSRLNFCGSNRIHHFLCDIKPLLKLACGNTELNQW). A helical membrane pass occupies residues 196–215 (LLSTVTGTIAMGPFFLTLLS). Residues 216–236 (YFYIITYLFFKTRSCSMLCKA) lie on the Cytoplasmic side of the membrane. A helical membrane pass occupies residues 237–257 (LSTCASHFMVVILFYAPVLFT). Over 258–270 (YIHPALESFMDQD) the chain is Extracellular. Residues 271 to 291 (RIVAIMYTVVTPVLNPLIYTL) form a helical membrane-spanning segment. Residues 292–307 (RNKEVKGALGRVIRRL) are Cytoplasmic-facing.

This sequence belongs to the G-protein coupled receptor 1 family.

The protein localises to the cell membrane. Functionally, odorant receptor. This is Olfactory receptor 12D2 (OR12D2) from Homo sapiens (Human).